The sequence spans 443 residues: ATP-dependent protease ATPase subunit HslU (443 aa).

Residues isoleucine 18 and 60–65 (GVGKTE) each bind ATP. A disordered region spans residues 141–165 (DQWGQNEENDTDSSTRQSFRKKLRE). ATP-binding residues include aspartate 256, glutamate 321, and arginine 393.

It belongs to the ClpX chaperone family. HslU subfamily. A double ring-shaped homohexamer of HslV is capped on each side by a ring-shaped HslU homohexamer. The assembly of the HslU/HslV complex is dependent on binding of ATP.

The protein resides in the cytoplasm. In terms of biological role, ATPase subunit of a proteasome-like degradation complex; this subunit has chaperone activity. The binding of ATP and its subsequent hydrolysis by HslU are essential for unfolding of protein substrates subsequently hydrolyzed by HslV. HslU recognizes the N-terminal part of its protein substrates and unfolds these before they are guided to HslV for hydrolysis. The sequence is that of ATP-dependent protease ATPase subunit HslU from Photobacterium profundum (strain SS9).